The following is a 221-amino-acid chain: 2-amino-5-formylamino-6-ribosylaminopyrimidin-4(3H)-one 5'-monophosphate deformylase (221 aa).

Positions 29, 31, 40, and 108 each coordinate Fe cation.

This sequence belongs to the creatininase superfamily. FAPy deformylase family. In terms of assembly, homodimer. Fe(2+) is required as a cofactor. Zn(2+) serves as cofactor.

The enzyme catalyses 2-amino-5-formylamino-6-(5-phospho-D-ribosylamino)pyrimidin-4(3H)-one + H2O = 2,5-diamino-6-(1-D-ribosylamino)pyrimidin-4(3H)-one 5'-phosphate + formate + H(+). It functions in the pathway cofactor biosynthesis; coenzyme F420 biosynthesis. It participates in cofactor biosynthesis; riboflavin biosynthesis. Functionally, catalyzes the hydrolysis of the formamide of 2-amino-5-formylamino-6-ribosylamino-4(3H)-pyrimidinone 5'-monophosphate (FAPy) to form 2,5-diamino-6-ribosylamino-4(3H)-pyrimidinone 5'-phosphate (APy). The protein is 2-amino-5-formylamino-6-ribosylaminopyrimidin-4(3H)-one 5'-monophosphate deformylase of Methanococcus maripaludis (strain DSM 14266 / JCM 13030 / NBRC 101832 / S2 / LL).